A 161-amino-acid polypeptide reads, in one-letter code: Endoribonuclease YbeY (161 aa).

His-120, His-124, and His-130 together coordinate Zn(2+).

Belongs to the endoribonuclease YbeY family. Requires Zn(2+) as cofactor.

It localises to the cytoplasm. In terms of biological role, single strand-specific metallo-endoribonuclease involved in late-stage 70S ribosome quality control and in maturation of the 3' terminus of the 16S rRNA. The protein is Endoribonuclease YbeY of Erythrobacter litoralis (strain HTCC2594).